The sequence spans 391 residues: Probable malate dehydrogenase 1 (391 aa).

NAD(+) is bound at residue 68 to 74 (GAAGQIA). 2 residues coordinate substrate: Arg-149 and Arg-155. Residues Asn-162, Gln-169, and 186-188 (VGN) contribute to the NAD(+) site. Asn-188 and Arg-219 together coordinate substrate. His-244 acts as the Proton acceptor in catalysis.

This sequence belongs to the LDH/MDH superfamily. MDH type 2 family. In terms of assembly, homodimer.

It catalyses the reaction (S)-malate + NAD(+) = oxaloacetate + NADH + H(+). Catalyzes the reversible oxidation of malate to oxaloacetate. The polypeptide is Probable malate dehydrogenase 1 (mdhA) (Dictyostelium discoideum (Social amoeba)).